Reading from the N-terminus, the 222-residue chain is Protein THYLAKOID ASSEMBLY 8, chloroplastic (222 aa).

Residues Met1 to Arg32 constitute a chloroplast transit peptide. PPR repeat units follow at residues Asp115–Ser149 and Asp150–Ser184.

This sequence belongs to the PPR family. P subfamily.

The protein resides in the plastid. It localises to the chloroplast thylakoid membrane. Functionally, essential protein required during embryogenesis. Mediates group II organellar RNA introns splicing (e.g. ycf3-2 and trnA). Binds weakly to specific RNA. Promotes the biogenesis of chloroplast thylakoid membranes. The polypeptide is Protein THYLAKOID ASSEMBLY 8, chloroplastic (Arabidopsis thaliana (Mouse-ear cress)).